Consider the following 237-residue polypeptide: Ribonuclease PH (237 aa).

Residues R86 and 124–126 each bind phosphate; that span reads GTR.

The protein belongs to the RNase PH family. As to quaternary structure, homohexameric ring arranged as a trimer of dimers.

It catalyses the reaction tRNA(n+1) + phosphate = tRNA(n) + a ribonucleoside 5'-diphosphate. Functionally, phosphorolytic 3'-5' exoribonuclease that plays an important role in tRNA 3'-end maturation. Removes nucleotide residues following the 3'-CCA terminus of tRNAs; can also add nucleotides to the ends of RNA molecules by using nucleoside diphosphates as substrates, but this may not be physiologically important. Probably plays a role in initiation of 16S rRNA degradation (leading to ribosome degradation) during starvation. This chain is Ribonuclease PH, found in Roseobacter denitrificans (strain ATCC 33942 / OCh 114) (Erythrobacter sp. (strain OCh 114)).